The primary structure comprises 630 residues: DNA topoisomerase 4 subunit B (630 aa).

Residues tyrosine 5, asparagine 42, aspartate 69, glycine 110 to isoleucine 116, and lysine 334 each bind ATP. Positions threonine 412–proline 525 constitute a Toprim domain. 3 residues coordinate Mg(2+): glutamate 418, aspartate 490, and aspartate 492.

The protein belongs to the type II topoisomerase family. ParE type 1 subfamily. In terms of assembly, heterotetramer composed of ParC and ParE. Mg(2+) serves as cofactor. Requires Mn(2+) as cofactor. Ca(2+) is required as a cofactor.

It carries out the reaction ATP-dependent breakage, passage and rejoining of double-stranded DNA.. With respect to regulation, pyrrolopyrimidines inhibit both GyrB and its paralog in topoisomerase IV (parE). Topoisomerase IV is essential for chromosome segregation; it is the principal protein responsible for decatenating newly replicated chromosomes. It relaxes supercoiled DNA. MukB stimulates the relaxation activity of topoisomerase IV and also has a modest effect on decatenation. This is DNA topoisomerase 4 subunit B from Escherichia coli (strain K12).